Consider the following 78-residue polypeptide: Putative membrane protein insertion efficiency factor (78 aa).

The protein belongs to the UPF0161 family.

It localises to the cell inner membrane. Could be involved in insertion of integral membrane proteins into the membrane. In Thiobacillus denitrificans (strain ATCC 25259 / T1), this protein is Putative membrane protein insertion efficiency factor.